Consider the following 524-residue polypeptide: 2-isopropylmalate synthase (524 aa).

One can recognise a Pyruvate carboxyltransferase domain in the interval 5–267 (VIIFDTTLRD…HTNIRHSEIH (263 aa)). Mn(2+)-binding residues include D14, H202, H204, and N238. The segment at 392 to 524 (KLEYLGVQSG…KTDKINTESV (133 aa)) is regulatory domain.

This sequence belongs to the alpha-IPM synthase/homocitrate synthase family. LeuA type 1 subfamily. As to quaternary structure, homodimer. Requires Mn(2+) as cofactor.

The protein resides in the cytoplasm. The enzyme catalyses 3-methyl-2-oxobutanoate + acetyl-CoA + H2O = (2S)-2-isopropylmalate + CoA + H(+). It participates in amino-acid biosynthesis; L-leucine biosynthesis; L-leucine from 3-methyl-2-oxobutanoate: step 1/4. Its function is as follows. Catalyzes the condensation of the acetyl group of acetyl-CoA with 3-methyl-2-oxobutanoate (2-ketoisovalerate) to form 3-carboxy-3-hydroxy-4-methylpentanoate (2-isopropylmalate). In Aeromonas salmonicida (strain A449), this protein is 2-isopropylmalate synthase.